Reading from the N-terminus, the 1070-residue chain is DNA-directed RNA polymerase subunit beta (1070 aa).

It belongs to the RNA polymerase beta chain family. As to quaternary structure, in plastids the minimal PEP RNA polymerase catalytic core is composed of four subunits: alpha, beta, beta', and beta''. When a (nuclear-encoded) sigma factor is associated with the core the holoenzyme is formed, which can initiate transcription.

It localises to the plastid. It is found in the chloroplast. The catalysed reaction is RNA(n) + a ribonucleoside 5'-triphosphate = RNA(n+1) + diphosphate. Functionally, DNA-dependent RNA polymerase catalyzes the transcription of DNA into RNA using the four ribonucleoside triphosphates as substrates. The chain is DNA-directed RNA polymerase subunit beta from Cucumis sativus (Cucumber).